Reading from the N-terminus, the 260-residue chain is Uroplakin-1b (260 aa).

Residues 1–12 (MAKDDSSVRCFQ) lie on the Cytoplasmic side of the membrane. A helical membrane pass occupies residues 13 to 38 (GLLIFGNVIVGMCGIALTAECIFFVS). Residues 39-60 (DQHSLYPLLEATDNDDIYGAAW) are Extracellular-facing. A helical transmembrane segment spans residues 61–81 (IGMFVGICLFCLSVLGIVGIM). Residues 82 to 86 (KSNRK) lie on the Cytoplasmic side of the membrane. The chain crosses the membrane as a helical span at residues 87-107 (ILLAYFILMFIVYGFEVASCI). The Extracellular portion of the chain corresponds to 108–229 (TAATQRDFFT…ELISGPMNRH (122 aa)). The chain crosses the membrane as a helical span at residues 230–250 (AWGVAWFGFAILCWTFWVLLG). Residues 251-260 (TMFYWSRIEY) lie on the Cytoplasmic side of the membrane.

The protein belongs to the tetraspanin (TM4SF) family. As to quaternary structure, heterodimer with uroplakin-3A (UPK3A) or uroplakin-3B (UPK3B).

Its subcellular location is the membrane. Its function is as follows. Component of the asymmetric unit membrane (AUM); a highly specialized biomembrane elaborated by terminally differentiated urothelial cells. The sequence is that of Uroplakin-1b (UPK1B) from Neovison vison (American mink).